The primary structure comprises 349 residues: Phosphoribosylformylglycinamidine cyclo-ligase (349 aa).

The protein belongs to the AIR synthase family.

It localises to the cytoplasm. The catalysed reaction is 2-formamido-N(1)-(5-O-phospho-beta-D-ribosyl)acetamidine + ATP = 5-amino-1-(5-phospho-beta-D-ribosyl)imidazole + ADP + phosphate + H(+). It participates in purine metabolism; IMP biosynthesis via de novo pathway; 5-amino-1-(5-phospho-D-ribosyl)imidazole from N(2)-formyl-N(1)-(5-phospho-D-ribosyl)glycinamide: step 2/2. This is Phosphoribosylformylglycinamidine cyclo-ligase from Psychrobacter cryohalolentis (strain ATCC BAA-1226 / DSM 17306 / VKM B-2378 / K5).